The chain runs to 430 residues: Transcription factor E2F1 (430 aa).

Positions 62 to 103 (ATPQAPRPAPSAPRPALGRPPVKRRLDLETDHQYLAGSSGPF) are cyclin A:CDK2 binding. The interaction with BIRC2/c-IAP1 stretch occupies residues 84 to 186 (KRRLDLETDH…KKSKNHIQWL (103 aa)). A disordered region spans residues 95-123 (YLAGSSGPFRGRGRHPGKGVKSPGEKSRY). The DNA-binding element occupies 105 to 189 (GRGRHPGKGV…KNHIQWLGSH (85 aa)). An N6-acetyllysine mark is found at lysine 112, lysine 115, and lysine 120. The segment at 148–169 (LNWAAEVLKVQKRRIYDITNVL) is leucine-zipper. A DEF box motif is present at residues 153–189 (EVLKVQKRRIYDITNVLEGIQLIAKKSKNHIQWLGSH). Lysine 180 bears the N6-methyllysine; by SETD7 mark. The required for interaction with TRIM28 stretch occupies residues 187-375 (GSHTMVGIGK…QLSPLVAADS (189 aa)). Residues 190–279 (TMVGIGKRLE…AVDSSETFQI (90 aa)) are dimerization. A disordered region spans residues 294 to 340 (PEESADGISPGKTSCQETSSGEDRTADSGPAGPPPSPPSTSPALDPS). Residues 324 to 333 (AGPPPSPPST) show a composition bias toward pro residues. The transactivation stretch occupies residues 361–430 (PMEEDQLSPL…DFGDLTPLDF (70 aa)). A phosphoserine mark is found at serine 368 and serine 396. The tract at residues 402–419 (LDYHFGLEEGEGIRDLFD) is RB1 binding. Threonine 426 is modified (phosphothreonine).

It belongs to the E2F/DP family. In terms of assembly, component of the DRTF1/E2F transcription factor complex. Forms heterodimers with DP family members. The E2F1 complex binds specifically hypophosphorylated RB1, the interaction represses E2F1-driven transcription. During the cell cycle, RB1 becomes phosphorylated in mid-to-late G1 phase, detaches from the DRTF1/E2F complex, rendering E2F transcriptionally active. Interacts with TRRAP, which probably mediates its interaction with histone acetyltransferase complexes, leading to transcription activation. Binds TOPBP1 and EAPP. Interacts with ARID3A. Interacts with TRIM28; the interaction inhibits E2F1 acetylation through recruiting HDAC1 and represses its transcriptional activity. Interaction with KAT2B; the interaction acetylates E2F1 enhancing its DNA-binding and transcriptional activity. Interacts with BIRC2/c-IAP1 (via BIR domains). The complex TFDP1:E2F1 interacts with CEBPA; the interaction prevents CEBPA binding to target genes promoters and represses its transcriptional activity. Interacts with RRP1B. Interacts with HCFC1. Interacts with KMT2E; the interaction is probably indirect and is mediated via HCFC1. Interacts with DCAF5 and L3MBTL3; the interaction requires methylation at Lys-180 and is necessary to target E2F1 for ubiquitination by the CRL4-DCAF5 E3 ubiquitin ligase complex. In terms of processing, phosphorylated by CDK2 and cyclin A-CDK2 in the S-phase. Phosphorylation by CHEK2 stabilizes E2F1 upon DNA damage and regulates its effect on transcription and apoptosis. Phosphorylation at Ser-396 by GSK3B promotes interaction with USP11, leading to its deubiquitination and stabilization. Post-translationally, ubiquitinated via 'Lys-63'-linked ubiquitin, leading to its degradation. Deubiquitinated by USP11 following phosphorylation by GSK3B, promoting its stability. Acetylation stimulates DNA-binding. Enhanced under stress conditions such as DNA damage and inhibited by retinoblastoma protein RB1. Regulated by KAP1/TRIM28 which recruits HDAC1 to E2F1 resulting in deacetylation. Acetylated by P/CAF/KAT2B. In terms of processing, methylation at Lys-180 by SETD7 promotes E2F1 ubiquitin-dependent proteasomal degradation.

Its subcellular location is the nucleus. BIRC2/c-IAP1 stimulates its transcriptional activity. Functionally, transcription activator that binds DNA cooperatively with DP proteins through the E2 recognition site, 5'-TTTC[CG]CGC-3' found in the promoter region of a number of genes whose products are involved in cell cycle regulation or in DNA replication. The DRTF1/E2F complex functions in the control of cell-cycle progression from G1 to S phase. E2F1 binds preferentially RB1 in a cell-cycle dependent manner. It can mediate both cell proliferation and TP53/p53-dependent apoptosis. Blocks adipocyte differentiation by binding to specific promoters repressing CEBPA binding to its target gene promoters. Directly activates transcription of PEG10. Positively regulates transcription of RRP1B. The sequence is that of Transcription factor E2F1 from Mus musculus (Mouse).